A 227-amino-acid chain; its full sequence is MNHLDRLERKIGYRFNDIALLKQALTHRSAATQHNERLEFLGDSILNFTIAEALYHQFPRCNEGELSRMRATLVREPTLAILARQFELGDYMSLGSGELKNGGFRRESILADCVEAIIGAMSLDQGLAVTTQVIRNWYQQLLAEIKPGDNQKDAKTRLQEYLQGKHLPLPTYEVVNIQGEAHCQIFTVECKVKSAGKIDRTFVAKGSSRRKAEQAAAEQILKELDIK.

Residues 4 to 126 (LDRLERKIGY…IIGAMSLDQG (123 aa)) enclose the RNase III domain. Glu-39 contributes to the Mg(2+) binding site. The active site involves Asp-43. Residues Asp-112 and Glu-115 each coordinate Mg(2+). Glu-115 is a catalytic residue. Residues 153-226 (DAKTRLQEYL…AEQILKELDI (74 aa)) enclose the DRBM domain.

The protein belongs to the ribonuclease III family. Homodimer. It depends on Mg(2+) as a cofactor.

Its subcellular location is the cytoplasm. The enzyme catalyses Endonucleolytic cleavage to 5'-phosphomonoester.. Its function is as follows. Digests double-stranded RNA. Involved in the processing of primary rRNA transcript to yield the immediate precursors to the large and small rRNAs (23S and 16S). Processes some mRNAs, and tRNAs when they are encoded in the rRNA operon. Processes pre-crRNA and tracrRNA of type II CRISPR loci if present in the organism. The protein is Ribonuclease 3 of Haemophilus influenzae (strain PittGG).